The chain runs to 121 residues: ATP synthase epsilon chain (121 aa).

It belongs to the ATPase epsilon chain family. As to quaternary structure, F-type ATPases have 2 components, CF(1) - the catalytic core - and CF(0) - the membrane proton channel. CF(1) has five subunits: alpha(3), beta(3), gamma(1), delta(1), epsilon(1). CF(0) has three main subunits: a, b and c.

Its subcellular location is the cell membrane. Produces ATP from ADP in the presence of a proton gradient across the membrane. This Mycobacterium sp. (strain JLS) protein is ATP synthase epsilon chain.